Reading from the N-terminus, the 263-residue chain is MEYLKRLALFISVIILTIFIMGCDSQSDTAENPKEGSKEAQIKKSFSKTLDMYPIKNLEDLYDKEGYRDGEFKKGDKGTWTISTDFAKSNKPGEMDSEGMVLHLNRNMRTATGHYTIRTTYDELGKMTREKNYRVELKNNKIVVLDKVEDVNLKHKIENFKFFSQYADFKDLKNYKNGRISINENVPYYEAEYKRNNSDGNVKKLREKYPITTKQSPILKLHIDGDIKGSSVGYKQIEYMFSKEKEDETFMSDFLNFGPSHSN.

An N-terminal signal peptide occupies residues 1–22 (MEYLKRLALFISVIILTIFIMG). A lipid anchor (N-palmitoyl cysteine) is attached at C23. C23 carries S-diacylglycerol cysteine lipidation.

This sequence belongs to the staphylococcal tandem lipoprotein family.

It is found in the cell membrane. This is an uncharacterized protein from Staphylococcus aureus (strain MSSA476).